The following is a 256-amino-acid chain: UPF0259 membrane protein YPO2199/y2042/YP_1997 (256 aa).

6 consecutive transmembrane segments (helical) span residues 20 to 40 (IAAI…LNQT), 90 to 110 (FSAL…IAMV), 118 to 138 (ALQA…LMFI), 141 to 161 (LVIQ…AIAL), 192 to 212 (LIVP…FLIS), and 221 to 241 (IATI…LVYL).

Belongs to the UPF0259 family.

Its subcellular location is the cell inner membrane. The sequence is that of UPF0259 membrane protein YPO2199/y2042/YP_1997 from Yersinia pestis.